Reading from the N-terminus, the 542-residue chain is Chaperonin GroEL (542 aa).

ATP is bound by residues 29–32 (TLGP), 86–90 (DGTTT), Gly-413, 477–479 (NAA), and Asp-493.

The protein belongs to the chaperonin (HSP60) family. Forms a cylinder of 14 subunits composed of two heptameric rings stacked back-to-back. Interacts with the co-chaperonin GroES.

It localises to the cytoplasm. The enzyme catalyses ATP + H2O + a folded polypeptide = ADP + phosphate + an unfolded polypeptide.. Its function is as follows. Together with its co-chaperonin GroES, plays an essential role in assisting protein folding. The GroEL-GroES system forms a nano-cage that allows encapsulation of the non-native substrate proteins and provides a physical environment optimized to promote and accelerate protein folding. The chain is Chaperonin GroEL from Heliobacterium modesticaldum (strain ATCC 51547 / Ice1).